Here is a 929-residue protein sequence, read N- to C-terminus: Collagen alpha-1(XII) chain (929 aa).

Positions 1-49 constitute a VWFA 1 domain; it reads DVEIFAVGVKDAVRSELEAIATPPTATHVYTVEDFDAFQRISFELTQSI. Fibronectin type-III domains are found at residues 67-156, 158-250, 251-340, 342-432, 434-521, and 523-613; these read PPRD…LEVR, APRN…VGEP, KNLR…LQER, SPRD…ASPD, KIVK…LSPF, and APRS…TLRD. A glycan (N-linked (GlcNAc...) asparagine) is linked at asparagine 98. O-linked (Xyl...) (chondroitin sulfate) serine glycosylation is found at serine 231, serine 324, and serine 415. Positions 633-805 constitute a VWFA 2 domain; the sequence is DIVLLVDGSW…SLLTNIVNDL (173 aa). The Fibronectin type-III 7 domain occupies 821-910; sequence PPSNLVTSEP…AGTETTLPIP (90 aa).

This sequence belongs to the fibril-associated collagens with interrupted helices (FACIT) family. Trimer of identical chains each containing 190 kDa of non-triple-helical sequences. Post-translationally, the triple-helical tail is stabilized by disulfide bonds at each end. In terms of processing, prolines at the third position of the tripeptide repeating unit (G-X-Y) are hydroxylated in some or all of the chains.

Its subcellular location is the secreted. It localises to the extracellular space. It is found in the extracellular matrix. In terms of biological role, type XII collagen interacts with type I collagen-containing fibrils, the COL1 domain could be associated with the surface of the fibrils, and the COL2 and NC3 domains may be localized in the perifibrillar matrix. Could play a developmental role in regeneration. This chain is Collagen alpha-1(XII) chain, found in Notophthalmus viridescens (Eastern newt).